The sequence spans 132 residues: Insulin-like 3 (132 aa).

Residues M1–L21 form the signal peptide. A Pyrrolidone carboxylic acid modification is found at Q27. Cystine bridges form between C34/C117, C46/C130, and C116/C121. A propeptide spans L67–H104 (c peptide like).

It belongs to the insulin family. As to quaternary structure, heterodimer of a B chain and an A chain linked by two disulfide bonds. 20% of B chains include an extra N-terminal pentapeptide. Expressed exclusively in Leydig cells of the testis.

It is found in the secreted. Functionally, seems to play a role in testicular function. May be a trophic hormone with a role in testicular descent in fetal life. Is a ligand for LGR8 receptor. In Bos taurus (Bovine), this protein is Insulin-like 3 (INSL3).